A 1427-amino-acid polypeptide reads, in one-letter code: Lysophospholipase NTE1 (1427 aa).

Over 1–60 (MDSLHVSSTSVLVDVVEAVETATSLVVDTAEAVATEQATPTAVISNALARSAYAAHTSLS) the chain is Cytoplasmic. The chain crosses the membrane as a helical span at residues 61 to 81 (YLAWAFGLWFLRLIGWVCYGI). The Lumenal portion of the chain corresponds to 82–96 (PTYVLGLLGRTINIS). The chain crosses the membrane as a helical span at residues 97-117 (LQFSSLLLILIALVTVVVAVV). The Cytoplasmic segment spans residues 118-1427 (RYKYLTVYSR…KRTIARRNSI (1310 aa)). Positions 281 to 296 (PMTSASDVPNMSLSSD) are enriched in polar residues. The segment at 281–315 (PMTSASDVPNMSLSSDGSDDLQKGEPQFGEPRLSE) is disordered. Residues 615–735 (LMAA…LTKV) and 731–870 (SLTK…VASR) contribute to the a nucleoside 3',5'-cyclic phosphate site. Residues 787 to 807 (GIVGGESGDAKDGKSHRKNLT) form a disordered region. The region spanning 1124–1288 (LVLGGGGARG…VDNLPVSEMK (165 aa)) is the PNPLA domain. Positions 1128 to 1133 (GGGARG) match the GXGXXG motif. The short motif at 1155-1159 (GTSIG) is the GXSXG element. The Nucleophile role is filled by serine 1157. Aspartate 1275 serves as the catalytic Proton acceptor. The short motif at 1275-1277 (DGG) is the DGA/G element.

The protein belongs to the NTE family.

Its subcellular location is the endoplasmic reticulum membrane. It catalyses the reaction a 1-acyl-sn-glycero-3-phosphocholine + H2O = sn-glycerol 3-phosphocholine + a fatty acid + H(+). Inhibited by organophosphorus esters. Its function is as follows. Intracellular phospholipase B that catalyzes the double deacylation of phosphatidylcholine (PC) to glycerophosphocholine (GroPCho). Plays an important role in membrane lipid homeostasis. Responsible for the rapid PC turnover in response to inositol, elevated temperatures, or when choline is present in the growth medium. The polypeptide is Lysophospholipase NTE1 (NTE1) (Yarrowia lipolytica (strain CLIB 122 / E 150) (Yeast)).